A 48-amino-acid chain; its full sequence is Phosphatidylserine decarboxylase proenzyme (48 aa).

It belongs to the phosphatidylserine decarboxylase family. Type 1 subfamily. Requires pyruvate as cofactor.

The catalysed reaction is a 1,2-diacyl-sn-glycero-3-phospho-L-serine + H(+) = a 1,2-diacyl-sn-glycero-3-phosphoethanolamine + CO2. The protein operates within phospholipid metabolism; phosphatidylethanolamine biosynthesis; phosphatidylethanolamine from CDP-diacylglycerol: step 2/2. This chain is Phosphatidylserine decarboxylase proenzyme (psd), found in Azotobacter vinelandii.